A 294-amino-acid polypeptide reads, in one-letter code: Phosphatidylserine decarboxylase proenzyme (294 aa).

Catalysis depends on charge relay system; for autoendoproteolytic cleavage activity residues Asp92, His149, and Ser252. Ser252 (schiff-base intermediate with substrate; via pyruvic acid; for decarboxylase activity) is an active-site residue. Ser252 carries the pyruvic acid (Ser); by autocatalysis modification.

It belongs to the phosphatidylserine decarboxylase family. PSD-B subfamily. Prokaryotic type I sub-subfamily. Heterodimer of a large membrane-associated beta subunit and a small pyruvoyl-containing alpha subunit. Pyruvate serves as cofactor. Is synthesized initially as an inactive proenzyme. Formation of the active enzyme involves a self-maturation process in which the active site pyruvoyl group is generated from an internal serine residue via an autocatalytic post-translational modification. Two non-identical subunits are generated from the proenzyme in this reaction, and the pyruvate is formed at the N-terminus of the alpha chain, which is derived from the carboxyl end of the proenzyme. The autoendoproteolytic cleavage occurs by a canonical serine protease mechanism, in which the side chain hydroxyl group of the serine supplies its oxygen atom to form the C-terminus of the beta chain, while the remainder of the serine residue undergoes an oxidative deamination to produce ammonia and the pyruvoyl prosthetic group on the alpha chain. During this reaction, the Ser that is part of the protease active site of the proenzyme becomes the pyruvoyl prosthetic group, which constitutes an essential element of the active site of the mature decarboxylase.

Its subcellular location is the cell membrane. It carries out the reaction a 1,2-diacyl-sn-glycero-3-phospho-L-serine + H(+) = a 1,2-diacyl-sn-glycero-3-phosphoethanolamine + CO2. The protein operates within phospholipid metabolism; phosphatidylethanolamine biosynthesis; phosphatidylethanolamine from CDP-diacylglycerol: step 2/2. Functionally, catalyzes the formation of phosphatidylethanolamine (PtdEtn) from phosphatidylserine (PtdSer). The sequence is that of Phosphatidylserine decarboxylase proenzyme from Bordetella avium (strain 197N).